Reading from the N-terminus, the 304-residue chain is Aspartate carbamoyltransferase catalytic subunit (304 aa).

Carbamoyl phosphate is bound by residues Arg49 and Thr50. Residue Lys77 participates in L-aspartate binding. Carbamoyl phosphate is bound by residues Arg99, His127, and Gln130. Residues Arg160 and Arg211 each contribute to the L-aspartate site. 2 residues coordinate carbamoyl phosphate: Ala250 and Pro251.

It belongs to the aspartate/ornithine carbamoyltransferase superfamily. ATCase family. In terms of assembly, heterododecamer (2C3:3R2) of six catalytic PyrB chains organized as two trimers (C3), and six regulatory PyrI chains organized as three dimers (R2).

It carries out the reaction carbamoyl phosphate + L-aspartate = N-carbamoyl-L-aspartate + phosphate + H(+). It participates in pyrimidine metabolism; UMP biosynthesis via de novo pathway; (S)-dihydroorotate from bicarbonate: step 2/3. Functionally, catalyzes the condensation of carbamoyl phosphate and aspartate to form carbamoyl aspartate and inorganic phosphate, the committed step in the de novo pyrimidine nucleotide biosynthesis pathway. The chain is Aspartate carbamoyltransferase catalytic subunit from Bacillus velezensis (strain DSM 23117 / BGSC 10A6 / LMG 26770 / FZB42) (Bacillus amyloliquefaciens subsp. plantarum).